The chain runs to 511 residues: uncharacterized protein (511 aa).

The tract at residues 59 to 79 (VPVAANDDQPDGSRQSVRGRQ) is disordered.

This sequence belongs to the transposase 25 family.

This is an uncharacterized protein from Sinorhizobium fredii (strain NBRC 101917 / NGR234).